A 347-amino-acid chain; its full sequence is Heme A synthase (347 aa).

8 helical membrane passes run 14-34 (VKIW…IGGI), 96-116 (FHRL…LYFM), 129-149 (FILI…MVKS), 162-182 (LAMH…HFLL), 199-219 (VFYI…LVAG), 260-280 (FIHE…LLVL), 287-307 (MYLL…TFIY), and 311-331 (IILA…SIYL). A heme-binding site is contributed by histidine 262. Heme is bound at residue histidine 317.

Belongs to the COX15/CtaA family. Type 2 subfamily. As to quaternary structure, interacts with CtaB. Requires heme b as cofactor.

It is found in the cell membrane. The catalysed reaction is Fe(II)-heme o + 2 A + H2O = Fe(II)-heme a + 2 AH2. Its pathway is porphyrin-containing compound metabolism; heme A biosynthesis; heme A from heme O: step 1/1. Catalyzes the conversion of heme O to heme A by two successive hydroxylations of the methyl group at C8. The first hydroxylation forms heme I, the second hydroxylation results in an unstable dihydroxymethyl group, which spontaneously dehydrates, resulting in the formyl group of heme A. The sequence is that of Heme A synthase from Ehrlichia ruminantium (strain Gardel).